The sequence spans 111 residues: Large ribosomal subunit protein uL22 (111 aa).

The protein belongs to the universal ribosomal protein uL22 family. In terms of assembly, part of the 50S ribosomal subunit.

Functionally, this protein binds specifically to 23S rRNA; its binding is stimulated by other ribosomal proteins, e.g. L4, L17, and L20. It is important during the early stages of 50S assembly. It makes multiple contacts with different domains of the 23S rRNA in the assembled 50S subunit and ribosome. Its function is as follows. The globular domain of the protein is located near the polypeptide exit tunnel on the outside of the subunit, while an extended beta-hairpin is found that lines the wall of the exit tunnel in the center of the 70S ribosome. The sequence is that of Large ribosomal subunit protein uL22 from Mycoplasma mycoides subsp. mycoides SC (strain CCUG 32753 / NCTC 10114 / PG1).